The primary structure comprises 463 residues: L-seryl-tRNA(Sec) selenium transferase (463 aa).

An N6-(pyridoxal phosphate)lysine modification is found at Lys-295.

The protein belongs to the SelA family. As to quaternary structure, homodecamer; pentamer of dimers. Binds only one seryl-tRNA(Sec) per dimer. The cofactor is pyridoxal 5'-phosphate.

It localises to the cytoplasm. The enzyme catalyses L-seryl-tRNA(Sec) + selenophosphate + H(+) = L-selenocysteinyl-tRNA(Sec) + phosphate. The protein operates within aminoacyl-tRNA biosynthesis; selenocysteinyl-tRNA(Sec) biosynthesis; selenocysteinyl-tRNA(Sec) from L-seryl-tRNA(Sec) (bacterial route): step 1/1. Functionally, converts seryl-tRNA(Sec) to selenocysteinyl-tRNA(Sec) required for selenoprotein biosynthesis. The sequence is that of L-seryl-tRNA(Sec) selenium transferase from Escherichia coli (strain 55989 / EAEC).